The sequence spans 199 residues: CASP-like protein 2B1 (199 aa).

At 1 to 26 (MSYLGVGLSPVNVAGTKMKLMDRKVR) the chain is on the cytoplasmic side. A helical transmembrane segment spans residues 27 to 47 (LTELILRCSVCALALVAAILI). At 48–69 (ATDTQVKEIFTIQKKAKYTDMK) the chain is on the extracellular side. Residues 70–90 (ALVFLVVVNGIAAAYSLLHMV) traverse the membrane as a helical segment. Residues 91-106 (RCVVGMMKGSVLFSKP) lie on the Cytoplasmic side of the membrane. The helical transmembrane segment at 107 to 127 (LAWAIFSGDQAIAYLTVAGVA) threads the bilayer. Topologically, residues 128 to 164 (AAAQSAAFAKLGEPELQWMKICTIYGKFCNQVGEGIA) are extracellular. A helical transmembrane segment spans residues 165 to 185 (TALLASIGMVLISSISAFALF). Over 186–199 (RLYGGNKAQQGSRW) the chain is Cytoplasmic.

This sequence belongs to the Casparian strip membrane proteins (CASP) family. In terms of assembly, homodimer and heterodimers.

It is found in the cell membrane. This Eutrema halophilum (Salt cress) protein is CASP-like protein 2B1.